Here is a 741-residue protein sequence, read N- to C-terminus: Endoplasmic reticulum membrane sensor NFE2L1 (741 aa).

Residues 7–24 form a helical; Signal-anchor for type II membrane protein membrane-spanning segment; the sequence is YLTEGLLQFTILLSLIGV. Disordered stretches follow at residues 108–148 and 198–220; these read DPEG…TEQG and QKEQDVDKELQDGREREDTWSGE. Over residues 113 to 131 the composition is skewed to polar residues; it reads VSGSQPNSGLALESSSGLQ. The segment at 191–199 is cholesterol recognition/amino acid consensus (CRAC) region; sequence VFDYSHRQK. The span at 198-216 shows a compositional bias: basic and acidic residues; sequence QKEQDVDKELQDGREREDT. N-linked (GlcNAc...) asparagine glycosylation is found at asparagine 319 and asparagine 331. The segment at 350–354 is CPD; the sequence is SPEVE. An N-linked (GlcNAc...) asparagine glycan is attached at asparagine 394. Disordered regions lie at residues 441-501 and 551-582; these read EEEF…DSET and SALDSADLPPPSTLKKGSKEKQADFLDKQMSR. Positions 447–451 match the Destruction motif motif; that stretch reads DSGLS. Over residues 447 to 492 the composition is skewed to low complexity; the sequence is DSGLSLDSSHSPSSLSSSEGSSSSSSSSSSSSASSSASSSFSEEGA. Phosphoserine; by CK2 is present on serine 497. A compositionally biased stretch (basic and acidic residues) spans 567–582; it reads GSKEKQADFLDKQMSR. Serine 568 is subject to Phosphoserine. The 64-residue stretch at 623–686 folds into the bZIP domain; sequence LIRDIRRRGK…RQMKQKVQSL (64 aa). Positions 625 to 644 are basic motif; that stretch reads RDIRRRGKNKMAAQNCRKRK. Positions 651–665 are leucine-zipper; sequence LERDVEDLQRDKARL. The interval 722 to 741 is disordered; that stretch reads RTMADQQARRQERKPKDRRK. A Nuclear localization signal motif is present at residues 730 to 737; that stretch reads RRQERKPK. Residues 732–741 are compositionally biased toward basic residues; that stretch reads QERKPKDRRK.

Belongs to the bZIP family. CNC subfamily. Interacts with KEAP1. In terms of assembly, interacts (via CPD region) with FBXW7; leading to its ubiquitination and degradation. Interacts with SYVN1/HRD1; leading to its ubiquitination and degradation. Interacts (when ubiquitinated) with DDI2; leading to its cleavage. As to quaternary structure, interacts (via the bZIP domain) with small MAF protein (MAFF, MAFG or MAFK); required for binding to antioxidant response elements (AREs) on DNA. Interacts (via Destruction motif) with BTRC; leading to its ubiquitination and degradation. Interacts with CEBPB; the heterodimer represses expression of DSPP during odontoblast differentiation. Interacts with MOTS-c, a peptide produced by the mitochondrially encoded 12S rRNA MT-RNR1. Cleaved at Leu-104 by the aspartyl protease DDI2 following retrotranslocation, releasing the protein from the endoplasmic reticulum membrane and forming the transcription factor NRF1 that translocates into the nucleus. Ubiquitination is prerequisite for cleavage by aspartyl protease DDI2. In terms of processing, N-glycosylated in normal conditions, when it has a single-pass type II membrane protein topology, with the DNA-binding domain facing the endoplasmic reticulum lumen. Deglycosylated during retrotranslocation to the cytosolic side of the membrane, to have a single-pass type III membrane protein topology with the major part of the protein facing the cytosol. Post-translationally, ubiquitinated by the SCF(FBXW7) complex and SYVN1/HRD1, leading to its degradation by the proteasome. Ubiquitinated during retrotranslocation to the cytosolic side of the membrane: ubiquitination does not lead to degradation and is required for processing by the aspartyl protease DDI2 and subsequent release from the endoplasmic reticulum membrane. Phosphorylation by CK2 at Ser-497 inhibits transcription factor activity, possibly by affecting DNA-binding activity. Phosphorylation at Ser-568 is required for interaction with CEBPB. In terms of processing, ubiquitinated by the SCF(BTRC) complex in the nucleus, leading to its degradation by the proteasome. As to expression, isoform 1: Widely expressed including kidney, brown fat, white fat, large intestine, small intestine, stomach, lung, brain and liver. Isoform 1: Expressed in mouse embryonic fibroblasts (MEF). Isoform 2: Widely expressed including kidney, brown fat, white fat, large intestine, small intestine, stomach, lung, brain and liver. Isoform 2: levels in white fat, lung and liver are increased compared to isoform 1 (at protein level). Isoform 2: levels are elevated in brown fat and brain, but are reduced in liver compared to isoform 1 levels. Isoform 2: Expressed in mouse embryonic fibroblasts (MEF).

The protein resides in the endoplasmic reticulum membrane. The protein localises to the nucleus. Its subcellular location is the cytoplasm. In terms of biological role, endoplasmic reticulum membrane sensor that translocates into the nucleus in response to various stresses to act as a transcription factor. Constitutes a precursor of the transcription factor NRF1. Able to detect various cellular stresses, such as cholesterol excess, oxidative stress or proteasome inhibition. In response to stress, it is released from the endoplasmic reticulum membrane following cleavage by the protease DDI2 and translocates into the nucleus to form the transcription factor NRF1. Acts as a key sensor of cholesterol excess: in excess cholesterol conditions, the endoplasmic reticulum membrane form of the protein directly binds cholesterol via its CRAC motif, preventing cleavage and release of the transcription factor NRF1, thereby allowing expression of genes promoting cholesterol removal, such as CD36. Involved in proteasome homeostasis: in response to proteasome inhibition, it is released from the endoplasmic reticulum membrane, translocates to the nucleus and activates expression of genes encoding proteasome subunits. Functionally, CNC-type bZIP family transcription factor that translocates to the nucleus and regulates expression of target genes in response to various stresses. Heterodimerizes with small-Maf proteins (MAFF, MAFG or MAFK) and binds DNA motifs including the antioxidant response elements (AREs), which regulate expression of genes involved in oxidative stress response. Activates or represses expression of target genes, depending on the context. Plays a key role in cholesterol homeostasis by acting as a sensor of cholesterol excess: in low cholesterol conditions, translocates into the nucleus and represses expression of genes involved in defense against cholesterol excess, such as CD36. In excess cholesterol conditions, the endoplasmic reticulum membrane form of the protein directly binds cholesterol via its CRAC motif, preventing cleavage and release of the transcription factor NRF1, thereby allowing expression of genes promoting cholesterol removal. Critical for redox balance in response to oxidative stress: acts by binding the AREs motifs on promoters and mediating activation of oxidative stress response genes, such as GCLC, GCLM, GSS, MT1 and MT2. Plays an essential role during fetal liver hematopoiesis: probably has a protective function against oxidative stress and is involved in lipid homeostasis in the liver. Involved in proteasome homeostasis: in response to proteasome inhibition, mediates the 'bounce-back' of proteasome subunits by translocating into the nucleus and activating expression of genes encoding proteasome subunits. Also involved in regulating glucose flux. Together with CEBPB; represses expression of DSPP during odontoblast differentiation. In response to ascorbic acid induction, activates expression of SP7/Osterix in osteoblasts. Its function is as follows. Transcription factor that binds the antioxidant response elements (ARE) consensus sequence on promoters and activates their expression. Transcription factor that binds the extended kappa 3 site of the TNF-alpha promoter after Fc gamma RIII stimulation and participates in the induction of this cytokine. This Mus musculus (Mouse) protein is Endoplasmic reticulum membrane sensor NFE2L1.